We begin with the raw amino-acid sequence, 102 residues long: U3-aranetoxin-Ce1a (102 aa).

The first 21 residues, 1–21 (MKHLSIFFVFFCCICVMLCDA), serve as a signal peptide directing secretion.

The protein belongs to the neurotoxin 20 family. As to expression, expressed by the venom gland.

The protein resides in the secreted. The sequence is that of U3-aranetoxin-Ce1a from Caerostris extrusa (Bark spider).